We begin with the raw amino-acid sequence, 276 residues long: Undecaprenyl-diphosphatase (276 aa).

Transmembrane regions (helical) follow at residues 43–63 (RAMA…VWEF), 85–105 (ANLL…ADLI), 109–129 (LFNP…MLWA), 183–203 (AATE…AVYS), 214–234 (SDLP…MIAV), and 249–269 (FAWY…FGWV).

It belongs to the UppP family.

Its subcellular location is the cell inner membrane. It carries out the reaction di-trans,octa-cis-undecaprenyl diphosphate + H2O = di-trans,octa-cis-undecaprenyl phosphate + phosphate + H(+). Its function is as follows. Catalyzes the dephosphorylation of undecaprenyl diphosphate (UPP). Confers resistance to bacitracin. The chain is Undecaprenyl-diphosphatase from Pseudomonas putida (strain W619).